Consider the following 816-residue polypeptide: Glycerol-3-phosphate acyltransferase (816 aa).

The HXXXXD motif motif lies at 298–303; sequence CHRSHM.

The protein belongs to the GPAT/DAPAT family.

The protein resides in the cell membrane. It carries out the reaction sn-glycerol 3-phosphate + an acyl-CoA = a 1-acyl-sn-glycero-3-phosphate + CoA. Its pathway is phospholipid metabolism; CDP-diacylglycerol biosynthesis; CDP-diacylglycerol from sn-glycerol 3-phosphate: step 1/3. This Hamiltonella defensa subsp. Acyrthosiphon pisum (strain 5AT) protein is Glycerol-3-phosphate acyltransferase.